The sequence spans 432 residues: Trigger factor (432 aa).

The PPIase FKBP-type domain maps to 161–246 (EDRVTIDFTG…LKKVEERELP (86 aa)).

Belongs to the FKBP-type PPIase family. Tig subfamily.

It is found in the cytoplasm. It catalyses the reaction [protein]-peptidylproline (omega=180) = [protein]-peptidylproline (omega=0). In terms of biological role, involved in protein export. Acts as a chaperone by maintaining the newly synthesized protein in an open conformation. Functions as a peptidyl-prolyl cis-trans isomerase. This Citrobacter koseri (strain ATCC BAA-895 / CDC 4225-83 / SGSC4696) protein is Trigger factor.